Consider the following 657-residue polypeptide: Probable serine/threonine-protein kinase CA_C1728 (657 aa).

In terms of domain architecture, Protein kinase spans 10–274 (YKIEEEIGVG…ELSNVKNNYV (265 aa)). Residues 16-24 (IGVGGTAVV) and Lys39 each bind ATP. The Proton acceptor role is filled by Asp143. Residues 286-334 (PAQIQNESNPNNKLDNDDTYYNGEPYNKEQPQEEPQEENEEPKNKIKGN) form a disordered region. The segment covering 288–298 (QIQNESNPNNK) has biased composition (polar residues). 3 PASTA domains span residues 375-441 (SVSK…DISS), 443-509 (DTDQ…VISR), and 512-577 (EVKK…VIGR). The disordered stretch occupies residues 581–657 (TAVQPPNNNN…TNTPNGTGQK (77 aa)). Low complexity-rich tracts occupy residues 584-600 (QPPNNNNGNGNQNQNQN), 613-637 (PTGGNNDNQNQNNTTNPNGTQPAGG), and 645-657 (GNVTNTPNGTGQK).

Belongs to the protein kinase superfamily. Ser/Thr protein kinase family.

The catalysed reaction is L-seryl-[protein] + ATP = O-phospho-L-seryl-[protein] + ADP + H(+). The enzyme catalyses L-threonyl-[protein] + ATP = O-phospho-L-threonyl-[protein] + ADP + H(+). This is Probable serine/threonine-protein kinase CA_C1728 from Clostridium acetobutylicum (strain ATCC 824 / DSM 792 / JCM 1419 / IAM 19013 / LMG 5710 / NBRC 13948 / NRRL B-527 / VKM B-1787 / 2291 / W).